The chain runs to 189 residues: Glycerol-3-phosphate acyltransferase (189 aa).

5 helical membrane passes run 1-21 (MVWL…AVLL), 50-70 (KLAI…VLVA), 72-92 (WLGL…IGHL), 111-131 (MLLG…LLTF), and 151-171 (LLAW…ALIV).

It belongs to the PlsY family. Probably interacts with PlsX.

It localises to the cell inner membrane. It catalyses the reaction an acyl phosphate + sn-glycerol 3-phosphate = a 1-acyl-sn-glycero-3-phosphate + phosphate. Its pathway is lipid metabolism; phospholipid metabolism. In terms of biological role, catalyzes the transfer of an acyl group from acyl-phosphate (acyl-PO(4)) to glycerol-3-phosphate (G3P) to form lysophosphatidic acid (LPA). This enzyme utilizes acyl-phosphate as fatty acyl donor, but not acyl-CoA or acyl-ACP. This chain is Glycerol-3-phosphate acyltransferase, found in Pseudomonas paraeruginosa (strain DSM 24068 / PA7) (Pseudomonas aeruginosa (strain PA7)).